A 104-amino-acid polypeptide reads, in one-letter code: N(4)-acetylcytidine amidohydrolase (104 aa).

One can recognise an ASCH domain in the interval 6–101 (TFFERFEHDI…EQLYMIRFKV (96 aa)). Catalysis depends on Lys20, which acts as the Proton acceptor. Thr23 functions as the Nucleophile in the catalytic mechanism. Residue Glu73 is the Proton donor of the active site.

It belongs to the N(4)-acetylcytidine amidohydrolase family.

It carries out the reaction N(4)-acetylcytidine + H2O = cytidine + acetate + H(+). It catalyses the reaction N(4)-acetyl-2'-deoxycytidine + H2O = 2'-deoxycytidine + acetate + H(+). The catalysed reaction is N(4)-acetylcytosine + H2O = cytosine + acetate + H(+). Catalyzes the hydrolysis of N(4)-acetylcytidine (ac4C). The polypeptide is N(4)-acetylcytidine amidohydrolase (Shewanella oneidensis (strain ATCC 700550 / JCM 31522 / CIP 106686 / LMG 19005 / NCIMB 14063 / MR-1)).